The sequence spans 409 residues: Argininosuccinate synthase (409 aa).

ATP is bound by residues 12 to 20 and alanine 39; that span reads AYSGGLDTS. Tyrosine 91 provides a ligand contact to L-citrulline. Glycine 121 lines the ATP pocket. 3 residues coordinate L-aspartate: threonine 123, asparagine 127, and aspartate 128. Asparagine 127 serves as a coordination point for L-citrulline. Residues arginine 131, serine 180, serine 189, glutamate 265, and tyrosine 277 each contribute to the L-citrulline site.

This sequence belongs to the argininosuccinate synthase family. Type 1 subfamily. In terms of assembly, homotetramer.

Its subcellular location is the cytoplasm. The catalysed reaction is L-citrulline + L-aspartate + ATP = 2-(N(omega)-L-arginino)succinate + AMP + diphosphate + H(+). It participates in amino-acid biosynthesis; L-arginine biosynthesis; L-arginine from L-ornithine and carbamoyl phosphate: step 2/3. The protein is Argininosuccinate synthase of Buchnera aphidicola subsp. Baizongia pistaciae (strain Bp).